The chain runs to 215 residues: Ribonuclease T (215 aa).

An Exonuclease domain is found at 20–194; sequence VVIDVETAGF…YDTMQTAKLF (175 aa). 4 residues coordinate Mg(2+): aspartate 23, glutamate 25, histidine 181, and aspartate 186. Histidine 181 functions as the Proton donor/acceptor in the catalytic mechanism.

It belongs to the RNase T family. In terms of assembly, homodimer. The cofactor is Mg(2+).

Its function is as follows. Trims short 3' overhangs of a variety of RNA species, leaving a one or two nucleotide 3' overhang. Responsible for the end-turnover of tRNA: specifically removes the terminal AMP residue from uncharged tRNA (tRNA-C-C-A). Also appears to be involved in tRNA biosynthesis. This chain is Ribonuclease T, found in Yersinia enterocolitica serotype O:8 / biotype 1B (strain NCTC 13174 / 8081).